Here is a 60-residue protein sequence, read N- to C-terminus: Large ribosomal subunit protein bL32 (60 aa).

Residues 1-20 show a composition bias toward basic residues; sequence MAVQKSRKSRSRRDMRRSHH. Positions 1–22 are disordered; that stretch reads MAVQKSRKSRSRRDMRRSHHRM.

Belongs to the bacterial ribosomal protein bL32 family.

This Psychrobacter arcticus (strain DSM 17307 / VKM B-2377 / 273-4) protein is Large ribosomal subunit protein bL32.